The sequence spans 113 residues: Ubiquinol-cytochrome-c reductase complex assembly factor 4 (113 aa).

The signal sequence occupies residues 1 to 18 (MWGSLCKAPLLRLRPTFA). Topologically, residues 19–72 (AVSNVKTIHIKASPDYNEGIDKSKPLKFSTSKASHRHWTVAKSLGSNQQRPWWK) are mitochondrial matrix. Residues 73–89 (VVPLSVFLTTVLLWAIF) form a helical membrane-spanning segment. Residues 90 to 113 (RKETDIDEAIYKPIEQLQDESENK) are Mitochondrial intermembrane-facing.

The protein belongs to the UQCC4 family.

The protein localises to the mitochondrion inner membrane. Its function is as follows. Required for the assembly and stability of the mitochondrial ubiquinol-cytochrome c reductase complex (complex III (CIII) or cytochrome b-c1 complex), a multisubunit transmembrane complex that is part of the mitochondrial electron transport chain (ETC) which drives oxidative phosphorylation. This is Ubiquinol-cytochrome-c reductase complex assembly factor 4 (uqcc4) from Xenopus tropicalis (Western clawed frog).